We begin with the raw amino-acid sequence, 1241 residues long: Sterol 3-beta-glucosyltransferase (1241 aa).

The span at 1–11 (MSGIESTEEPC) shows a compositional bias: acidic residues. Disordered regions lie at residues 1–97 (MSGI…KPSI) and 124–189 (DQQV…TLRK). The span at 25–34 (PEERQTRKDS) shows a compositional bias: basic and acidic residues. A compositionally biased stretch (acidic residues) spans 136–155 (ESEDQQADESSDEQEDDDQD). The region spanning 220-267 (NKLKRTFDISDTDVFISDYPCWLMGDVLLQGHLYITKHHILFFAFLPK) is the GRAM 1 domain. Residues 271–373 (SISKSGALTT…WVSSLKKHIF (103 aa)) enclose the PH domain. Residues 499–556 (DDFSQEQESAESSKPVSDDEIVSADDNQELEEKQPQDNLANAEKENHDKVSRANSRRT) are disordered. A compositionally biased stretch (acidic residues) spans 516-527 (DDEIVSADDNQE). The segment covering 540–549 (AEKENHDKVS) has biased composition (basic and acidic residues). The GRAM 2 domain maps to 609–675 (ERFRKHFSLT…SDIENVNKEK (67 aa)). The disordered stretch occupies residues 720–741 (KGSTDSSPPNASEGSSDESCNL). A compositionally biased stretch (polar residues) spans 723–741 (TDSSPPNASEGSSDESCNL). Residues Ser797, Arg798, Asp800, Asn1071, Val1098, His1100, His1113, Ser1116, Gly1117, Thr1118, Asp1137, and Gln1138 each coordinate UDP-alpha-D-glucose.

The protein belongs to the glycosyltransferase 28 family.

Its subcellular location is the cytoplasm. The protein resides in the preautophagosomal structure membrane. The enzyme catalyses a sterol + UDP-alpha-D-glucose = a sterol 3-beta-D-glucoside + UDP + H(+). It carries out the reaction ergosterol + UDP-alpha-D-glucose = ergosteryl 3-beta-D-glucoside + UDP + H(+). Its function is as follows. Sterol glycosyltransferase responsible for the glycosylation of ergosterol to form ergosterol-glucoside. Mediates autophagic degradation of peroxisomes (pexophagy). In Pichia angusta (Yeast), this protein is Sterol 3-beta-glucosyltransferase.